Here is a 943-residue protein sequence, read N- to C-terminus: Leucine--tRNA ligase (943 aa).

The 'HIGH' region motif lies at 40–51 (PYPSGAGLHVGH). The short motif at 717 to 721 (KMSKS) is the 'KMSKS' region element. Lys-720 contacts ATP.

Belongs to the class-I aminoacyl-tRNA synthetase family.

Its subcellular location is the cytoplasm. The catalysed reaction is tRNA(Leu) + L-leucine + ATP = L-leucyl-tRNA(Leu) + AMP + diphosphate. The sequence is that of Leucine--tRNA ligase from Bacteroides fragilis (strain YCH46).